The sequence spans 305 residues: tRNA pseudouridine synthase B (305 aa).

Asp-39 functions as the Nucleophile in the catalytic mechanism.

Belongs to the pseudouridine synthase TruB family. Type 1 subfamily.

It carries out the reaction uridine(55) in tRNA = pseudouridine(55) in tRNA. Its function is as follows. Responsible for synthesis of pseudouridine from uracil-55 in the psi GC loop of transfer RNAs. This is tRNA pseudouridine synthase B from Staphylococcus aureus (strain Newman).